A 198-amino-acid chain; its full sequence is UPF0301 protein Tfu_2389 (198 aa).

Belongs to the UPF0301 (AlgH) family.

This is UPF0301 protein Tfu_2389 from Thermobifida fusca (strain YX).